Reading from the N-terminus, the 49-residue chain is Small integral membrane protein 27 (49 aa).

The helical transmembrane segment at 11–31 threads the bilayer; that stretch reads WTYSLLLLAIVLLSWGFVIYA.

The protein resides in the membrane. The polypeptide is Small integral membrane protein 27 (Mus musculus (Mouse)).